The sequence spans 195 residues: Sec-independent protein translocase protein TatB (195 aa).

Residues 1 to 21 form a helical membrane-spanning segment; that stretch reads MFDIGFSELALIAVVALVVLG. A disordered region spans residues 130–195; it reads EPGSAQPHTP…SSTSPQEKTP (66 aa). Composition is skewed to low complexity over residues 145 to 157 and 175 to 195; these read PVVA…APAP and TTHA…EKTP.

It belongs to the TatB family. In terms of assembly, the Tat system comprises two distinct complexes: a TatABC complex, containing multiple copies of TatA, TatB and TatC subunits, and a separate TatA complex, containing only TatA subunits. Substrates initially bind to the TatABC complex, which probably triggers association of the separate TatA complex to form the active translocon.

It is found in the cell inner membrane. Functionally, part of the twin-arginine translocation (Tat) system that transports large folded proteins containing a characteristic twin-arginine motif in their signal peptide across membranes. Together with TatC, TatB is part of a receptor directly interacting with Tat signal peptides. TatB may form an oligomeric binding site that transiently accommodates folded Tat precursor proteins before their translocation. The polypeptide is Sec-independent protein translocase protein TatB (Xanthomonas campestris pv. campestris (strain 8004)).